The primary structure comprises 464 residues: Soluble pyridine nucleotide transhydrogenase (464 aa).

Residue 35–44 (DSRRQVGGNC) participates in FAD binding.

Belongs to the class-I pyridine nucleotide-disulfide oxidoreductase family. Requires FAD as cofactor.

The protein resides in the cytoplasm. It carries out the reaction NAD(+) + NADPH = NADH + NADP(+). Functionally, conversion of NADPH, generated by peripheral catabolic pathways, to NADH, which can enter the respiratory chain for energy generation. The chain is Soluble pyridine nucleotide transhydrogenase from Pseudomonas entomophila (strain L48).